The chain runs to 211 residues: tRNA (guanine-N(7)-)-methyltransferase (211 aa).

S-adenosyl-L-methionine contacts are provided by Glu44, Asp69, Asp96, and Asp118. The active site involves Asp118. Lys122 serves as a coordination point for substrate. The segment at 124–129 is interaction with RNA; the sequence is RHEKRR. Substrate contacts are provided by residues Asp154 and 191 to 194; that span reads TEYE.

The protein belongs to the class I-like SAM-binding methyltransferase superfamily. TrmB family.

The enzyme catalyses guanosine(46) in tRNA + S-adenosyl-L-methionine = N(7)-methylguanosine(46) in tRNA + S-adenosyl-L-homocysteine. The protein operates within tRNA modification; N(7)-methylguanine-tRNA biosynthesis. In terms of biological role, catalyzes the formation of N(7)-methylguanine at position 46 (m7G46) in tRNA. This is tRNA (guanine-N(7)-)-methyltransferase from Streptococcus pneumoniae (strain CGSP14).